Here is a 529-residue protein sequence, read N- to C-terminus: Bifunctional purine biosynthesis protein PurH (529 aa).

An MGS-like domain is found at Met1–Val148.

This sequence belongs to the PurH family.

It carries out the reaction (6R)-10-formyltetrahydrofolate + 5-amino-1-(5-phospho-beta-D-ribosyl)imidazole-4-carboxamide = 5-formamido-1-(5-phospho-D-ribosyl)imidazole-4-carboxamide + (6S)-5,6,7,8-tetrahydrofolate. The catalysed reaction is IMP + H2O = 5-formamido-1-(5-phospho-D-ribosyl)imidazole-4-carboxamide. The protein operates within purine metabolism; IMP biosynthesis via de novo pathway; 5-formamido-1-(5-phospho-D-ribosyl)imidazole-4-carboxamide from 5-amino-1-(5-phospho-D-ribosyl)imidazole-4-carboxamide (10-formyl THF route): step 1/1. Its pathway is purine metabolism; IMP biosynthesis via de novo pathway; IMP from 5-formamido-1-(5-phospho-D-ribosyl)imidazole-4-carboxamide: step 1/1. This chain is Bifunctional purine biosynthesis protein PurH, found in Erwinia tasmaniensis (strain DSM 17950 / CFBP 7177 / CIP 109463 / NCPPB 4357 / Et1/99).